The sequence spans 302 residues: Glutamate/aspartate import solute-binding protein (302 aa).

An N-terminal signal peptide occupies residues 1-22 (MQLRKPATAILALALSAGLAQA).

This sequence belongs to the bacterial solute-binding protein 3 family. As to quaternary structure, the complex is composed of two ATP-binding proteins (GltL), two transmembrane proteins (GltJ and GltK) and a solute-binding protein (GltI).

It localises to the periplasm. In terms of biological role, part of the ABC transporter complex GltIJKL involved in glutamate and aspartate uptake. Binds to both glutamate and aspartate. The polypeptide is Glutamate/aspartate import solute-binding protein (gltI) (Escherichia coli (strain K12)).